We begin with the raw amino-acid sequence, 526 residues long: Protein MGF 505-2R (526 aa).

Belongs to the asfivirus MGF 505 family.

In terms of biological role, plays a role in virus cell tropism, and may be required for efficient virus replication in macrophages. The polypeptide is Protein MGF 505-2R (African swine fever virus (isolate Pig/Kenya/KEN-50/1950) (ASFV)).